The chain runs to 216 residues: MRCKGFLFDLDGTLVDSLPAVERAWSNWARRHGLAPEEVLAFIHGKQAITSLRHFMAGKSEADIAAEFTRLEHIEATETEGITALPGAIALLSHLNKAGIPWAIVTSGSMPVARARHKIAGLPAPEVFVTAERVKRGKPEPDAYLLGAQLLGLAPQECVVVEDAPAGVLSGLAAGCHVIAVNAPADTPRLNEVDLVLHSLEQITVTKQPNGDVIIQ.

Asp-9 (nucleophile) is an active-site residue. Residues Asp-9 and Asp-11 each contribute to the a divalent metal cation site. Substrate is bound by residues 9–11, 106–107, and Lys-138; these read DLD and TS. Asp-11 serves as the catalytic Proton donor. Asp-163 lines the a divalent metal cation pocket.

It belongs to the HAD-like hydrolase superfamily. CbbY/CbbZ/Gph/YieH family. It depends on Mg(2+) as a cofactor. Mn(2+) serves as cofactor. Co(2+) is required as a cofactor.

The catalysed reaction is sugar phosphate + H2O = sugar + phosphate.. It carries out the reaction D-mannitol 1-phosphate + H2O = D-mannitol + phosphate. It catalyses the reaction D-sorbitol 6-phosphate + H2O = D-sorbitol + phosphate. Functionally, sugar-phosphate phosphohydrolase that appears to contribute to butanol tolerance. Catalyzes the dephosphorylation of D-mannitol 1-phosphate and D-sorbitol 6-phosphate. Is also able to dephosphorylate other sugar phosphates in vitro including ribose-5-phosphate (Rib5P), 2-deoxyribose-5-phosphate, fructose-1-phosphate (Fru1P), fructose-6-phosphate (Fru6P), and glucose-6-phosphate (Glu6P). Selectively hydrolyzes beta-D-glucose-1-phosphate (bGlu1P) and has no activity with the alpha form. This chain is Hexitol phosphatase A, found in Escherichia coli (strain K12).